A 505-amino-acid polypeptide reads, in one-letter code: 2-isopropylmalate synthase (505 aa).

One can recognise a Pyruvate carboxyltransferase domain in the interval 5-267 (VYIFDTTLRD…YTNIKTEEIY (263 aa)). The Mn(2+) site is built by Asp14, His202, His204, and Asn238. The regulatory domain stretch occupies residues 391–505 (TLEYLHISSG…VNKLIWDSQK (115 aa)).

It belongs to the alpha-IPM synthase/homocitrate synthase family. LeuA type 1 subfamily. In terms of assembly, homodimer. Requires Mn(2+) as cofactor.

The protein resides in the cytoplasm. It carries out the reaction 3-methyl-2-oxobutanoate + acetyl-CoA + H2O = (2S)-2-isopropylmalate + CoA + H(+). Its pathway is amino-acid biosynthesis; L-leucine biosynthesis; L-leucine from 3-methyl-2-oxobutanoate: step 1/4. Its function is as follows. Catalyzes the condensation of the acetyl group of acetyl-CoA with 3-methyl-2-oxobutanoate (2-ketoisovalerate) to form 3-carboxy-3-hydroxy-4-methylpentanoate (2-isopropylmalate). In Pelotomaculum thermopropionicum (strain DSM 13744 / JCM 10971 / SI), this protein is 2-isopropylmalate synthase.